The primary structure comprises 312 residues: Lipid-translocating exporter-like protein RTA1 (312 aa).

A disordered region spans residues 1–21 (MSPESKKITAHGSTSMPLSRT). Residues 11 to 21 (HGSTSMPLSRT) show a composition bias toward polar residues. Helical transmembrane passes span 29–49 (IPLT…FFLA), 61–81 (LSTM…YFIC), 103–123 (FITF…LLAG), 142–162 (AMIT…SFHV), 183–203 (FMMV…RSAY), and 223–243 (SLML…ILPI). N-linked (GlcNAc...) asparagine glycans are attached at residues Asn258 and Asn304.

The protein belongs to the lipid-translocating exporter (LTE) (TC 9.A.26.1) family.

Its subcellular location is the membrane. Its pathway is siderophore biosynthesis. Its function is as follows. Lipid-translocating exporter-like protein; part of the gene cluster that mediates the biosynthesis of hydroxamate-containing siderophores that play a critical role in virulence via intracellular iron acquisition during macrophage infection. The protein is Lipid-translocating exporter-like protein RTA1 of Ajellomyces capsulatus (Darling's disease fungus).